We begin with the raw amino-acid sequence, 542 residues long: Heterogeneous nuclear ribonucleoprotein L-like (542 aa).

The tract at residues 1 to 71 (MSSSSSSPRE…QPEAGGSHHK (71 aa)) is disordered. Residues 18-29 (YESQAKRLKTEE) are compositionally biased toward basic and acidic residues. Residue Lys26 forms a Glycyl lysine isopeptide (Lys-Gly) (interchain with G-Cter in SUMO2) linkage. Ser35 is modified (phosphoserine). Residue Thr46 is modified to Phosphothreonine. Residues 48–58 (RGGGDGGGGGR) are compositionally biased toward gly residues. Residues Ser59, Ser68, and Ser75 each carry the phosphoserine modification. RRM domains are found at residues 76 to 150 (PVVH…YSTS), 166 to 244 (NKVL…YARP), and 335 to 409 (SVVM…VSKQ). A Glycyl lysine isopeptide (Lys-Gly) (interchain with G-Cter in SUMO2) cross-link involves residue Lys491.

Interacts with HNRNPL. As to expression, widely expressed. Detected in bone marrow stroma cells, skeletal muscle, heart, placenta, pancreas, kidney and lung.

RNA-binding protein that functions as a regulator of alternative splicing for multiple target mRNAs, including PTPRC/CD45 and STAT5A. Required for alternative splicing of PTPRC. In Homo sapiens (Human), this protein is Heterogeneous nuclear ribonucleoprotein L-like (HNRNPLL).